The primary structure comprises 671 residues: DNA ligase (671 aa).

Residues 32–36, 81–82, and Glu-113 each bind NAD(+); these read DAEYD and SL. Lys-115 (N6-AMP-lysine intermediate) is an active-site residue. NAD(+) contacts are provided by Arg-136, Glu-173, Lys-290, and Lys-314. Residues Cys-408, Cys-411, Cys-426, and Cys-432 each contribute to the Zn(2+) site. One can recognise a BRCT domain in the interval 593-671; it reads EIDSPFAGKT…EAEMIRLLGA (79 aa).

The protein belongs to the NAD-dependent DNA ligase family. LigA subfamily. It depends on Mg(2+) as a cofactor. Requires Mn(2+) as cofactor.

It carries out the reaction NAD(+) + (deoxyribonucleotide)n-3'-hydroxyl + 5'-phospho-(deoxyribonucleotide)m = (deoxyribonucleotide)n+m + AMP + beta-nicotinamide D-nucleotide.. Its function is as follows. DNA ligase that catalyzes the formation of phosphodiester linkages between 5'-phosphoryl and 3'-hydroxyl groups in double-stranded DNA using NAD as a coenzyme and as the energy source for the reaction. It is essential for DNA replication and repair of damaged DNA. The polypeptide is DNA ligase (Salmonella gallinarum (strain 287/91 / NCTC 13346)).